Here is a 202-residue protein sequence, read N- to C-terminus: Orotate phosphoribosyltransferase (202 aa).

Residues Lys-93 and 113 to 121 (EDIITTGGS) each bind 5-phospho-alpha-D-ribose 1-diphosphate. The orotate site is built by Thr-117 and Arg-145.

It belongs to the purine/pyrimidine phosphoribosyltransferase family. PyrE subfamily. Homodimer. It depends on Mg(2+) as a cofactor.

The enzyme catalyses orotidine 5'-phosphate + diphosphate = orotate + 5-phospho-alpha-D-ribose 1-diphosphate. Its pathway is pyrimidine metabolism; UMP biosynthesis via de novo pathway; UMP from orotate: step 1/2. Functionally, catalyzes the transfer of a ribosyl phosphate group from 5-phosphoribose 1-diphosphate to orotate, leading to the formation of orotidine monophosphate (OMP). In Campylobacter concisus (strain 13826), this protein is Orotate phosphoribosyltransferase.